The primary structure comprises 388 residues: Succinate--CoA ligase [ADP-forming] subunit beta (388 aa).

An ATP-grasp domain is found at 9–244 (KQLFARYGMP…KSQEDEREAQ (236 aa)). Residues lysine 46, 53 to 55 (GRG), glutamate 99, threonine 102, and glutamate 107 contribute to the ATP site. Residues asparagine 199 and aspartate 213 each coordinate Mg(2+). Substrate is bound by residues asparagine 264 and 321–323 (GIV).

Belongs to the succinate/malate CoA ligase beta subunit family. In terms of assembly, heterotetramer of two alpha and two beta subunits. Mg(2+) serves as cofactor.

It catalyses the reaction succinate + ATP + CoA = succinyl-CoA + ADP + phosphate. It carries out the reaction GTP + succinate + CoA = succinyl-CoA + GDP + phosphate. The protein operates within carbohydrate metabolism; tricarboxylic acid cycle; succinate from succinyl-CoA (ligase route): step 1/1. In terms of biological role, succinyl-CoA synthetase functions in the citric acid cycle (TCA), coupling the hydrolysis of succinyl-CoA to the synthesis of either ATP or GTP and thus represents the only step of substrate-level phosphorylation in the TCA. The beta subunit provides nucleotide specificity of the enzyme and binds the substrate succinate, while the binding sites for coenzyme A and phosphate are found in the alpha subunit. The polypeptide is Succinate--CoA ligase [ADP-forming] subunit beta (Yersinia enterocolitica serotype O:8 / biotype 1B (strain NCTC 13174 / 8081)).